Consider the following 225-residue polypeptide: Holliday junction branch migration complex subunit RuvA (225 aa).

The interval 1-71 (MISWISGELV…EDSDLLFGFS (71 aa)) is domain I. Residues 72 to 150 (SKDQKNFFIE…NELKIQEEKS (79 aa)) are domain II. A flexible linker region spans residues 151 to 161 (KDEFHIKDNKI). Positions 161–225 (INKIVSDIEL…LDNDSSNIVR (65 aa)) are domain III.

It belongs to the RuvA family. As to quaternary structure, homotetramer. Forms an RuvA(8)-RuvB(12)-Holliday junction (HJ) complex. HJ DNA is sandwiched between 2 RuvA tetramers; dsDNA enters through RuvA and exits via RuvB. An RuvB hexamer assembles on each DNA strand where it exits the tetramer. Each RuvB hexamer is contacted by two RuvA subunits (via domain III) on 2 adjacent RuvB subunits; this complex drives branch migration. In the full resolvosome a probable DNA-RuvA(4)-RuvB(12)-RuvC(2) complex forms which resolves the HJ.

The protein resides in the cytoplasm. Functionally, the RuvA-RuvB-RuvC complex processes Holliday junction (HJ) DNA during genetic recombination and DNA repair, while the RuvA-RuvB complex plays an important role in the rescue of blocked DNA replication forks via replication fork reversal (RFR). RuvA specifically binds to HJ cruciform DNA, conferring on it an open structure. The RuvB hexamer acts as an ATP-dependent pump, pulling dsDNA into and through the RuvAB complex. HJ branch migration allows RuvC to scan DNA until it finds its consensus sequence, where it cleaves and resolves the cruciform DNA. The sequence is that of Holliday junction branch migration complex subunit RuvA from Prochlorococcus marinus (strain MIT 9312).